The following is an 842-amino-acid chain: Pentatricopeptide repeat-containing protein At3g23020 (842 aa).

A disordered region spans residues 40–61 (YVPGTHESDKGPQRSTRNGDRG). A compositionally biased stretch (basic and acidic residues) spans 45 to 59 (HESDKGPQRSTRNGD). PPR repeat units lie at residues 186–220 (NVIH…GIKP), 221–255 (INST…GMQP), 256–290 (DEVT…ENKA), 297–331 (SSYT…GIVP), 332–362 (TTVT…MKLH), 366–400 (DTRT…GLKP), 401–435 (DPVS…NVEI), 436–470 (DEYT…GNMS), 474–500 (YSAN…CQEV), 504–538 (TVIE…GVTP), 539–573 (DKCT…GYVS), 574–608 (DCIP…NIEP), 609–643 (DVVV…GIPG), 644–674 (NSVI…LLQS), 682–712 (DVYT…MKQR), 716–750 (NEFT…KILT), 751–785 (DPLS…GIQP), and 786–820 (DDST…EIKR).

Belongs to the PPR family. P subfamily.

This is Pentatricopeptide repeat-containing protein At3g23020 from Arabidopsis thaliana (Mouse-ear cress).